A 284-amino-acid chain; its full sequence is D-tagatose-1,6-bisphosphate aldolase subunit GatY (284 aa).

The active-site Proton donor is the Asp82. His83 and His180 together coordinate Zn(2+). Residue Gly181 participates in dihydroxyacetone phosphate binding. His208 serves as a coordination point for Zn(2+). Dihydroxyacetone phosphate contacts are provided by residues 209 to 211 (GAS) and 230 to 233 (NVAT).

Belongs to the class II fructose-bisphosphate aldolase family. TagBP aldolase GatY subfamily. In terms of assembly, forms a complex with GatZ. Zn(2+) is required as a cofactor.

The catalysed reaction is D-tagatofuranose 1,6-bisphosphate = D-glyceraldehyde 3-phosphate + dihydroxyacetone phosphate. It participates in carbohydrate metabolism; D-tagatose 6-phosphate degradation; D-glyceraldehyde 3-phosphate and glycerone phosphate from D-tagatose 6-phosphate: step 2/2. Functionally, catalytic subunit of the tagatose-1,6-bisphosphate aldolase GatYZ, which catalyzes the reversible aldol condensation of dihydroxyacetone phosphate (DHAP or glycerone-phosphate) with glyceraldehyde 3-phosphate (G3P) to produce tagatose 1,6-bisphosphate (TBP). Requires GatZ subunit for full activity and stability. Is involved in the catabolism of galactitol. The chain is D-tagatose-1,6-bisphosphate aldolase subunit GatY from Shigella sonnei (strain Ss046).